The sequence spans 418 residues: Histidine--tRNA ligase (418 aa).

This sequence belongs to the class-II aminoacyl-tRNA synthetase family.

It is found in the cytoplasm. The enzyme catalyses tRNA(His) + L-histidine + ATP = L-histidyl-tRNA(His) + AMP + diphosphate + H(+). The sequence is that of Histidine--tRNA ligase from Methanococcus vannielii (strain ATCC 35089 / DSM 1224 / JCM 13029 / OCM 148 / SB).